The following is a 263-amino-acid chain: MELQLLNTLRNHNPIVFNIANFVTVQDVANGLNALGASPIMSAEVQEAETMVQIAGAVCINLGTLTTTQIDQMRVVGKLANQYHKPVVLDPVAVGAVPYRKEVALALLSDFQVDVIRGNAGEIAALAGMDWQAKGIDAGSGQGDLVEIAQACAQQFQCCVILSGPTDVITDGQRVVKVANGTPLFQRHVGSGDLLSSIVAAFTAVSPTDVYQAAQVACLVLAGAGELVASQLTADRPATFAIDLIDRLSLVTVSEIQTIAKVD.

Met41 serves as a coordination point for substrate. Residues Arg117 and Ser163 each coordinate ATP. Gly190 contacts substrate.

Belongs to the Thz kinase family. The cofactor is Mg(2+).

The enzyme catalyses 5-(2-hydroxyethyl)-4-methylthiazole + ATP = 4-methyl-5-(2-phosphooxyethyl)-thiazole + ADP + H(+). It participates in cofactor biosynthesis; thiamine diphosphate biosynthesis; 4-methyl-5-(2-phosphoethyl)-thiazole from 5-(2-hydroxyethyl)-4-methylthiazole: step 1/1. Functionally, catalyzes the phosphorylation of the hydroxyl group of 4-methyl-5-beta-hydroxyethylthiazole (THZ). The sequence is that of Hydroxyethylthiazole kinase from Lactiplantibacillus plantarum (strain ATCC BAA-793 / NCIMB 8826 / WCFS1) (Lactobacillus plantarum).